The primary structure comprises 179 residues: Protein GrpE (179 aa).

The disordered stretch occupies residues 1-23; that stretch reads MSEEIKEQNVQDAQNENLAPDSV.

This sequence belongs to the GrpE family. In terms of assembly, homodimer.

The protein localises to the cytoplasm. Its function is as follows. Participates actively in the response to hyperosmotic and heat shock by preventing the aggregation of stress-denatured proteins, in association with DnaK and GrpE. It is the nucleotide exchange factor for DnaK and may function as a thermosensor. Unfolded proteins bind initially to DnaJ; upon interaction with the DnaJ-bound protein, DnaK hydrolyzes its bound ATP, resulting in the formation of a stable complex. GrpE releases ADP from DnaK; ATP binding to DnaK triggers the release of the substrate protein, thus completing the reaction cycle. Several rounds of ATP-dependent interactions between DnaJ, DnaK and GrpE are required for fully efficient folding. The polypeptide is Protein GrpE (Campylobacter curvus (strain 525.92)).